Here is a 71-residue protein sequence, read N- to C-terminus: Small ribosomal subunit protein bS21 (71 aa).

The protein belongs to the bacterial ribosomal protein bS21 family.

This is Small ribosomal subunit protein bS21 from Blochmanniella floridana.